The sequence spans 213 residues: Large ribosomal subunit protein uL3 (213 aa).

The residue at position 151 (Gln151) is an N5-methylglutamine.

Belongs to the universal ribosomal protein uL3 family. As to quaternary structure, part of the 50S ribosomal subunit. Forms a cluster with proteins L14 and L19. Post-translationally, methylated by PrmB.

Functionally, one of the primary rRNA binding proteins, it binds directly near the 3'-end of the 23S rRNA, where it nucleates assembly of the 50S subunit. The sequence is that of Large ribosomal subunit protein uL3 from Rhizobium etli (strain CIAT 652).